The sequence spans 206 residues: Ribosomal RNA large subunit methyltransferase E (206 aa).

5 residues coordinate S-adenosyl-L-methionine: G60, W62, D80, D96, and D121. K161 acts as the Proton acceptor in catalysis.

It belongs to the class I-like SAM-binding methyltransferase superfamily. RNA methyltransferase RlmE family.

The protein resides in the cytoplasm. It carries out the reaction uridine(2552) in 23S rRNA + S-adenosyl-L-methionine = 2'-O-methyluridine(2552) in 23S rRNA + S-adenosyl-L-homocysteine + H(+). Functionally, specifically methylates the uridine in position 2552 of 23S rRNA at the 2'-O position of the ribose in the fully assembled 50S ribosomal subunit. In Legionella pneumophila (strain Corby), this protein is Ribosomal RNA large subunit methyltransferase E.